The following is a 347-amino-acid chain: 3-isopropylmalate dehydrogenase (347 aa).

Residue 76–87 (GPKWTDPNNRPE) coordinates NAD(+). 4 residues coordinate substrate: Arg94, Arg104, Arg132, and Asp217. Mg(2+) contacts are provided by Asp217, Asp241, and Asp245. 275-287 (GSAPDIANEDKAN) is a binding site for NAD(+).

Belongs to the isocitrate and isopropylmalate dehydrogenases family. LeuB type 1 subfamily. Homodimer. It depends on Mg(2+) as a cofactor. Mn(2+) is required as a cofactor.

The protein resides in the cytoplasm. It catalyses the reaction (2R,3S)-3-isopropylmalate + NAD(+) = 4-methyl-2-oxopentanoate + CO2 + NADH. It participates in amino-acid biosynthesis; L-leucine biosynthesis; L-leucine from 3-methyl-2-oxobutanoate: step 3/4. Functionally, catalyzes the oxidation of 3-carboxy-2-hydroxy-4-methylpentanoate (3-isopropylmalate) to 3-carboxy-4-methyl-2-oxopentanoate. The product decarboxylates to 4-methyl-2 oxopentanoate. In Staphylococcus epidermidis (strain ATCC 12228 / FDA PCI 1200), this protein is 3-isopropylmalate dehydrogenase.